Here is a 129-residue protein sequence, read N- to C-terminus: MAKAPVCARKRVRKQVSDGVAHIHASFNNTIVTITDRQGNALGWATAGGSGFRGSRKSTPFAAQVAAERCADAVKEYGIKNLEVMVKGPGPGRESTIRALNAAGFRITNITDVTPIPHNGCRPPKKRRV.

It belongs to the universal ribosomal protein uS11 family. As to quaternary structure, part of the 30S ribosomal subunit. Interacts with proteins S7 and S18. Binds to IF-3.

In terms of biological role, located on the platform of the 30S subunit, it bridges several disparate RNA helices of the 16S rRNA. Forms part of the Shine-Dalgarno cleft in the 70S ribosome. This Salmonella typhi protein is Small ribosomal subunit protein uS11.